The sequence spans 145 residues: UPF0179 protein MmarC7_0952 (145 aa).

The protein belongs to the UPF0179 family.

This is UPF0179 protein MmarC7_0952 from Methanococcus maripaludis (strain C7 / ATCC BAA-1331).